The sequence spans 558 residues: Glypican-1 (558 aa).

Positions 1–23 (MELRARGWWLLCAAAALVACTRG) are cleaved as a signal peptide. 7 disulfides stabilise this stretch: Cys-32–Cys-68, Cys-62–Cys-256, Cys-69–Cys-259, Cys-191–Cys-343, Cys-246–Cys-279, Cys-268–Cys-415, and Cys-272–Cys-401. Asn-79 and Asn-116 each carry an N-linked (GlcNAc...) asparagine glycan. The interval 478–531 (FQDASDDGSGSGSGGGCPDDACGRRVSKKSSSSRTPLIHALPGLSEQEGQKTSA) is disordered. O-linked (Xyl...) (heparan sulfate) serine glycans are attached at residues Ser-486, Ser-488, and Ser-490. Ser-530 is lipidated: GPI-anchor amidated serine. The propeptide at 531 to 558 (AATRPEPHYFFLLFLFTLVLAAARPRWR) is removed in mature form.

This sequence belongs to the glypican family. In terms of processing, S-nitrosylated in a Cu(2+)-dependent manner. Nitric acid (NO) is released from the nitrosylated cysteines by ascorbate or by some other reducing agent, in a Cu(2+) or Zn(2+) dependent manner. This free nitric oxide is then capable of cleaving the heparan sulfate side chains. N- and O-glycosylated. N-glycosylation is mainly of the complex type containing sialic acid. O-glycosylated with heparan sulfate. The heparan sulfate chains can be cleaved either by the action of heparanase or, degraded by a deaminative process that uses nitric oxide (NO) released from the S-nitrosylated cysteines. This process is triggered by ascorbate, or by some other reducing agent, in a Cu(2+)- or Zn(2+) dependent manner. Cu(2+) ions are provided by ceruloproteins such as APP, PRNP or CP which associate with GCP1 in intracellular compartments or lipid rafts. Post-translationally, this cell-associated glypican is further processed to give rise to a medium-released species. As to expression, nervous system.

It localises to the cell membrane. It is found in the endosome. Its subcellular location is the secreted. The protein localises to the extracellular space. Functionally, cell surface proteoglycan that bears heparan sulfate. May act as a catalyst in increasing the rate of conversion of prion protein PRPN(C) to PRNP(Sc) via associating (via the heparan sulfate side chains) with both forms of PRPN, targeting them to lipid rafts and facilitating their interaction. Required for proper skeletal muscle differentiation by sequestering FGF2 in lipid rafts preventing its binding to receptors (FGFRs) and inhibiting the FGF-mediated signaling. Binds Cu(2+) or Zn(2+) ions. Binds, via the heparan sulfate side chains, alpha-4 (V) collagen and participates in Schwann cell myelination. This is Glypican-1 (Gpc1) from Rattus norvegicus (Rat).